A 596-amino-acid chain; its full sequence is Probable lysosomal cobalamin transporter (596 aa).

10 consecutive transmembrane segments (helical) span residues 7–27 (AFIWVAYAVAVGIVALIAAIF), 46–66 (IITLTSLLATVLLLPVDIALV), 95–115 (IVYYALYSLDAVLCLLVIPFT), 145–165 (TLFFVVLVVILFLVGFFAPVA), 196–216 (LLISLGTLLYILYTSVGLALL), 313–333 (LVGGILLLLLSVIIWASMLIT), 350–370 (ILGSINIFQPLNWVFVKSSIV), 376–396 (VLMALLVLFLFSSSVTGIAVI), 420–440 (MATVMLTLIILAINYSIAMII), and 507–527 (FFGALAFWAQFVFLAIFLIVF). Residues 566-596 (WQDIRGKAKNQTPSRGAAGRGIRGDDDHDDD) are disordered. Positions 587–596 (IRGDDDHDDD) are enriched in basic and acidic residues.

It belongs to the LIMR family. LMBRD1 subfamily.

The protein localises to the lysosome membrane. Its function is as follows. Probable lysosomal cobalamin transporter. Required to export cobalamin from lysosomes allowing its conversion to cofactors. The sequence is that of Probable lysosomal cobalamin transporter from Sclerotinia sclerotiorum (strain ATCC 18683 / 1980 / Ss-1) (White mold).